We begin with the raw amino-acid sequence, 130 residues long: MVLLDPLANALSTIKNAEAIGKSSCIVRPASKNIGNVLKVMQDLGYIGDFEFIDDGKAGIYSVTLVGRINKCGAIKPRYSVGTGSFERWEKQFLPAKNFGALILTTSSGVMSQYEARDKKIGGQLLAYVY.

The protein belongs to the universal ribosomal protein uS8 family. In terms of assembly, part of the 30S ribosomal subunit.

One of the primary rRNA binding proteins, it binds directly to 16S rRNA central domain where it helps coordinate assembly of the platform of the 30S subunit. The sequence is that of Small ribosomal subunit protein uS8 from Methanosarcina mazei (strain ATCC BAA-159 / DSM 3647 / Goe1 / Go1 / JCM 11833 / OCM 88) (Methanosarcina frisia).